The sequence spans 116 residues: Calcium-regulated OB-fold protein CarO (116 aa).

A signal peptide spans 1–21 (MKLRHLPLIAAIGLFSTVTLA).

The protein localises to the periplasm. In terms of biological role, plays a role in intracellular Ca(2+) homeostasis. Involved in cell protection against oxidative stress in strain 25W. This chain is Calcium-regulated OB-fold protein CarO, found in Pseudomonas aeruginosa (strain ATCC 15692 / DSM 22644 / CIP 104116 / JCM 14847 / LMG 12228 / 1C / PRS 101 / PAO1).